The chain runs to 1778 residues: Nuclear receptor corepressor 1 (1778 aa).

One can recognise an SANT domain in the interval 125-176; sequence DRLEEWSPEERSLFKSRQADHVKIFHGLTEFFVDKTASDLVLFYYMNKKTED. Positions 356–398 constitute a Myb-like domain; sequence WTDDEKTKLVTLINSSPTLDWVSISEGMNRRPNECKMQYDAMN. Over residues 409–421 the composition is skewed to acidic residues; it reads VDEEDGNGQEEGG. Disordered stretches follow at residues 409-671, 992-1024, 1195-1218, 1276-1339, 1414-1434, and 1646-1718; these read VDEE…TVST, SLTP…AGRS, KLQQ…ATPQ, QHLQ…SRSV, PPKT…RTLS, and AAPT…PPLP. Composition is skewed to low complexity over residues 431 to 442 and 450 to 469; these read SSAAARRSGLAR and TPRA…VTRA. Over residues 478 to 493 the composition is skewed to acidic residues; sequence DLGEEIDEMEIEDNDE. Basic and acidic residues predominate over residues 494–513; that stretch reads DASRGSRGKDSKAPSDRDGS. Composition is skewed to acidic residues over residues 517–545 and 599–616; these read MEGD…EEEE and ESDD…DVDE. Composition is skewed to low complexity over residues 626-639 and 649-671; these read SSSS…SVGG and LVQQ…TVST. A compositionally biased stretch (low complexity) spans 1276 to 1285; sequence QHLQQQQQHH. Positions 1687–1696 are enriched in low complexity; that stretch reads SSVNSNVSDV.

Belongs to the N-CoR nuclear receptor corepressors family. Interacts with gex-3. Interacts (via C-terminus) with nhr-60. As to expression, in larvae, expressed in pharyngeal neurons, ventral and dorsal nerve cords, tail neurons, egg-laying neurons and egg-laying muscles. Detected in the neurons of the pharyngeal nerve ring, head neurons, tail neurons and egg-laying muscles in adults. Detected in male-specific tail ganglia and rays in males.

It localises to the nucleus. In terms of biological role, mediates transcriptional repression by certain nuclear receptors. Plays a role in development and neuronal function. May play a role in muscle-specific oxidative mitochondrial metabolism. This is Nuclear receptor corepressor 1 from Caenorhabditis elegans.